Reading from the N-terminus, the 538-residue chain is Importin subunit alpha-6 (538 aa).

The region spanning methionine 1 to alanine 58 is the IBB domain. Positions methionine 1–leucine 69 are disordered. Over residues alanine 7 to glutamine 46 the composition is skewed to basic and acidic residues. The segment covering serine 56–leucine 69 has biased composition (polar residues). 8 ARM repeats span residues asparagine 109–serine 149, serine 152–glycine 191, proline 194–arginine 234, lysine 236–aspartate 275, asparagine 278–threonine 317, aspartate 320–alanine 360, threonine 363–serine 402, and histidine 406–lysine 445.

Belongs to the importin alpha family. Forms a complex with importin subunit beta-1.

The protein resides in the nucleus envelope. Binds to conventional NLS motifs and mediates nuclear protein import across the nuclear envelope. Acts as a cellular receptor for the nuclear import of the virD2 protein of Agrobacterium, but is not essential for Agrobacterium-mediated root transformation. This is Importin subunit alpha-6 from Arabidopsis thaliana (Mouse-ear cress).